Reading from the N-terminus, the 251-residue chain is Large ribosomal subunit protein uL3 (251 aa).

Disordered regions lie at residues S140 to M162 and A229 to A251. Residue Q151 is modified to N5-methylglutamine.

Belongs to the universal ribosomal protein uL3 family. In terms of assembly, part of the 50S ribosomal subunit. Forms a cluster with proteins L14 and L19. Post-translationally, methylated by PrmB.

One of the primary rRNA binding proteins, it binds directly near the 3'-end of the 23S rRNA, where it nucleates assembly of the 50S subunit. The protein is Large ribosomal subunit protein uL3 of Methylobacterium nodulans (strain LMG 21967 / CNCM I-2342 / ORS 2060).